A 262-amino-acid chain; its full sequence is Putative hydro-lyase Cbei_2760 (262 aa).

Belongs to the D-glutamate cyclase family.

The chain is Putative hydro-lyase Cbei_2760 from Clostridium beijerinckii (strain ATCC 51743 / NCIMB 8052) (Clostridium acetobutylicum).